The chain runs to 453 residues: tRNA modification GTPase MnmE (453 aa).

(6S)-5-formyl-5,6,7,8-tetrahydrofolate-binding residues include arginine 22, glutamate 79, and lysine 119. In terms of domain architecture, TrmE-type G spans 215-376 (GMKVVIAGRP…LKAHLKSLMG (162 aa)). Asparagine 225 serves as a coordination point for K(+). GTP is bound by residues 225-230 (NAGKSS), 244-250 (TEIAGTT), 269-272 (DTAG), and 334-337 (NKAD). A Mg(2+)-binding site is contributed by serine 229. K(+) is bound by residues threonine 244, isoleucine 246, and threonine 249. Threonine 250 lines the Mg(2+) pocket. Lysine 453 contributes to the (6S)-5-formyl-5,6,7,8-tetrahydrofolate binding site.

It belongs to the TRAFAC class TrmE-Era-EngA-EngB-Septin-like GTPase superfamily. TrmE GTPase family. As to quaternary structure, homodimer. Heterotetramer of two MnmE and two MnmG subunits. Requires K(+) as cofactor.

The protein resides in the cytoplasm. Its function is as follows. Exhibits a very high intrinsic GTPase hydrolysis rate. Involved in the addition of a carboxymethylaminomethyl (cmnm) group at the wobble position (U34) of certain tRNAs, forming tRNA-cmnm(5)s(2)U34. This Shewanella loihica (strain ATCC BAA-1088 / PV-4) protein is tRNA modification GTPase MnmE.